We begin with the raw amino-acid sequence, 483 residues long: Cobyric acid synthase (483 aa).

Residues 252–439 (KLNVVVPVLT…LHGFFDEAEA (188 aa)) form the GATase cobBQ-type domain. The Nucleophile role is filled by Cys333. His431 is an active-site residue.

It belongs to the CobB/CobQ family. CobQ subfamily.

Its pathway is cofactor biosynthesis; adenosylcobalamin biosynthesis. Catalyzes amidations at positions B, D, E, and G on adenosylcobyrinic A,C-diamide. NH(2) groups are provided by glutamine, and one molecule of ATP is hydrogenolyzed for each amidation. In Vibrio parahaemolyticus serotype O3:K6 (strain RIMD 2210633), this protein is Cobyric acid synthase.